A 1433-amino-acid polypeptide reads, in one-letter code: DNA-directed RNA polymerase subunit beta' (1433 aa).

Residues Cys66, Cys68, Cys81, and Cys84 each coordinate Zn(2+). Residues Asp474, Asp476, and Asp478 each contribute to the Mg(2+) site. Residues Cys823, Cys897, Cys904, and Cys907 each contribute to the Zn(2+) site.

This sequence belongs to the RNA polymerase beta' chain family. The RNAP catalytic core consists of 2 alpha, 1 beta, 1 beta' and 1 omega subunit. When a sigma factor is associated with the core the holoenzyme is formed, which can initiate transcription. Requires Mg(2+) as cofactor. Zn(2+) is required as a cofactor.

The catalysed reaction is RNA(n) + a ribonucleoside 5'-triphosphate = RNA(n+1) + diphosphate. Functionally, DNA-dependent RNA polymerase catalyzes the transcription of DNA into RNA using the four ribonucleoside triphosphates as substrates. The polypeptide is DNA-directed RNA polymerase subunit beta' (Amoebophilus asiaticus (strain 5a2)).